Here is a 269-residue protein sequence, read N- to C-terminus: 4-hydroxy-tetrahydrodipicolinate reductase (269 aa).

Residues 8-13 (GAAGRM) and glutamate 34 each bind NAD(+). NADP(+) is bound at residue arginine 35. NAD(+) contacts are provided by residues 98-100 (GTT) and 122-125 (APNY). Histidine 155 serves as the catalytic Proton donor/acceptor. (S)-2,3,4,5-tetrahydrodipicolinate is bound at residue histidine 156. Lysine 159 (proton donor) is an active-site residue. (S)-2,3,4,5-tetrahydrodipicolinate is bound at residue 165-166 (GT).

This sequence belongs to the DapB family.

The protein localises to the cytoplasm. The catalysed reaction is (S)-2,3,4,5-tetrahydrodipicolinate + NAD(+) + H2O = (2S,4S)-4-hydroxy-2,3,4,5-tetrahydrodipicolinate + NADH + H(+). The enzyme catalyses (S)-2,3,4,5-tetrahydrodipicolinate + NADP(+) + H2O = (2S,4S)-4-hydroxy-2,3,4,5-tetrahydrodipicolinate + NADPH + H(+). The protein operates within amino-acid biosynthesis; L-lysine biosynthesis via DAP pathway; (S)-tetrahydrodipicolinate from L-aspartate: step 4/4. Its function is as follows. Catalyzes the conversion of 4-hydroxy-tetrahydrodipicolinate (HTPA) to tetrahydrodipicolinate. This Aliivibrio fischeri (strain ATCC 700601 / ES114) (Vibrio fischeri) protein is 4-hydroxy-tetrahydrodipicolinate reductase.